The sequence spans 101 residues: UPF0473 protein MGAS10750_Spy1887 (101 aa).

Belongs to the UPF0473 family.

This is UPF0473 protein MGAS10750_Spy1887 from Streptococcus pyogenes serotype M4 (strain MGAS10750).